The following is a 226-amino-acid chain: MEHRVFTVANFFSSNHDFITGFFVVLTAVLMFLISLGASRKMQMVPMGLQNVYESIISAILSVAKDIIGEELARKYFPLAGTIALYVFFSNMIGIIPSFESPTASWSFTLVLALIVFFYYHFEGIRVQGFFKYFAHFAGPVKWLAPFMFPIEIISHFSRIVSLSFRLFGNIKGDDMFLLIMLLLVPWVIPVAPFMVLFFMGILQAFVFMILTYVYLAGAVLTDEGH.

A run of 6 helical transmembrane segments spans residues 18-38 (FITG…SLGA), 76-96 (YFPL…IGII), 105-125 (SWSF…FEGI), 134-154 (FAHF…IEII), 179-199 (LIML…VLFF), and 201-221 (GILQ…GAVL).

It belongs to the ATPase A chain family. F-type ATPases have 2 components, CF(1) - the catalytic core - and CF(0) - the membrane proton channel. CF(1) has five subunits: alpha(3), beta(3), gamma(1), delta(1), epsilon(1). CF(0) has three main subunits: a(1), b(2) and c(9-12). The alpha and beta chains form an alternating ring which encloses part of the gamma chain. CF(1) is attached to CF(0) by a central stalk formed by the gamma and epsilon chains, while a peripheral stalk is formed by the delta and b chains.

It is found in the cell inner membrane. Its function is as follows. Key component of the proton channel; it plays a direct role in the translocation of protons across the membrane. In Helicobacter acinonychis (strain Sheeba), this protein is ATP synthase subunit a.